The primary structure comprises 2185 residues: Genome polyprotein (2185 aa).

A lipid anchor (N-myristoyl glycine; by host) is attached at Gly-2. Topologically, residues 2 to 1495 (GAQVSTQKTG…HVNRAFICLQ (1494 aa)) are cytoplasmic. Positions 566–582 (FFQGPPGEVVERAIARV) are amphipathic alpha-helix. Residues His-872 and Asp-890 each act as for protease 2A activity in the active site. Cys-907 and Cys-909 together coordinate Zn(2+). Catalysis depends on Cys-961, which acts as the For protease 2A activity. Cys-967 and His-969 together coordinate Zn(2+). The interval 1101–1173 (NSGWLKKFTE…EQSAPSQSDQ (73 aa)) is membrane-binding. The oligomerization stretch occupies residues 1101–1239 (NSGWLKKFTE…SPGAGKSVAT (139 aa)). The tract at residues 1122–1126 (AIKIQ) is RNA-binding. In terms of domain architecture, SF3 helicase spans 1205-1361 (EKKMSNYIQF…SMYSQNGKIN (157 aa)). Zn(2+) is bound by residues Cys-1369, Cys-1381, and Cys-1386. The C4-type; degenerate zinc-finger motif lies at 1369–1386 (CDEECCPVNFKKCCPLVC). An RNA-binding region spans residues 1413–1420 (EYNHRHSV). The oligomerization stretch occupies residues 1424–1429 (LEALFQ). An intramembrane segment occupies 1496–1511 (ALTTFVSVAGIIYIIY). Over 1512-2185 (KLFAGFQGAY…TLRRKWLDSF (674 aa)) the chain is Cytoplasmic. Tyr-1521 carries the post-translational modification O-(5'-phospho-RNA)-tyrosine. In terms of domain architecture, Peptidase C3 spans 1541-1719 (GPAFEFAVAM…FSAALLRHYF (179 aa)). Active-site for protease 3C activity residues include His-1580, Glu-1611, and Cys-1687. In terms of domain architecture, RdRp catalytic spans 1950-2066 (GHLIAFDYSG…SYPWPIDASL (117 aa)). 2 residues coordinate Mg(2+): Asp-1956 and Asp-2052.

This sequence belongs to the picornaviruses polyprotein family. In terms of assembly, interacts with capsid protein VP1 and capsid protein VP3 to form heterotrimeric protomers. Interacts with capsid protein VP0, and capsid protein VP3 to form heterotrimeric protomers. Five protomers subsequently associate to form pentamers which serve as building blocks for the capsid. Interacts with capsid protein VP2, capsid protein VP3 and capsid protein VP4 following cleavage of capsid protein VP0. As to quaternary structure, interacts with capsid protein VP1 and capsid protein VP3 in the mature capsid. In terms of assembly, interacts with capsid protein VP0 and capsid protein VP1 to form heterotrimeric protomers. Five protomers subsequently associate to form pentamers which serve as building blocks for the capsid. Interacts with capsid protein VP4 in the mature capsid. Interacts with protein 2C; this interaction may be important for virion morphogenesis. Interacts with capsid protein VP1 and capsid protein VP3. As to quaternary structure, homodimer. In terms of assembly, homohexamer; forms a hexameric ring structure with 6-fold symmetry characteristic of AAA+ ATPases. Interacts (via N-terminus) with host RTN3 (via reticulon domain); this interaction is important for viral replication. Interacts with capsid protein VP3; this interaction may be important for virion morphogenesis. Interacts with protein 3CD. As to quaternary structure, homodimer. Interacts with host GBF1. Interacts (via GOLD domain) with host ACBD3 (via GOLD domain); this interaction allows the formation of a viral protein 3A/ACBD3 heterotetramer with a 2:2 stoichiometry, which will stimulate the recruitment of host PI4KB in order to synthesize PI4P at the viral RNA replication sites. In terms of assembly, interacts with RNA-directed RNA polymerase. Interacts with protein 3AB and with RNA-directed RNA polymerase. As to quaternary structure, interacts with Viral protein genome-linked and with protein 3CD. Mg(2+) is required as a cofactor. Post-translationally, specific enzymatic cleavages in vivo by the viral proteases yield processing intermediates and the mature proteins. Myristoylation is required for the formation of pentamers during virus assembly. Further assembly of 12 pentamers and a molecule of genomic RNA generates the provirion. In terms of processing, during virion maturation, immature virions are rendered infectious following cleavage of VP0 into VP4 and VP2. This maturation seems to be an autocatalytic event triggered by the presence of RNA in the capsid and it is followed by a conformational change infectious virion. Post-translationally, myristoylation is required during RNA encapsidation and formation of the mature virus particle. VPg is uridylylated by the polymerase into VPg-pUpU. This acts as a nucleotide-peptide primer for the genomic RNA replication.

It is found in the virion. Its subcellular location is the host cytoplasm. The protein localises to the host cytoplasmic vesicle membrane. The protein resides in the host nucleus. It catalyses the reaction a ribonucleoside 5'-triphosphate + H2O = a ribonucleoside 5'-diphosphate + phosphate + H(+). The catalysed reaction is Selective cleavage of Tyr-|-Gly bond in the picornavirus polyprotein.. The enzyme catalyses RNA(n) + a ribonucleoside 5'-triphosphate = RNA(n+1) + diphosphate. It carries out the reaction Selective cleavage of Gln-|-Gly bond in the poliovirus polyprotein. In other picornavirus reactions Glu may be substituted for Gln, and Ser or Thr for Gly.. Replication or transcription is subject to high level of random mutations by the nucleotide analog ribavirin. Its function is as follows. Forms an icosahedral capsid of pseudo T=3 symmetry with capsid proteins VP2 and VP3. The capsid is 300 Angstroms in diameter, composed of 60 copies of each capsid protein and enclosing the viral positive strand RNA genome. Capsid protein VP1 mainly forms the vertices of the capsid. Capsid protein VP1 interacts with host cell receptor to provide virion attachment to target host cells. This attachment induces virion internalization. Tyrosine kinases are probably involved in the entry process. After binding to its receptor, the capsid undergoes conformational changes. Capsid protein VP1 N-terminus (that contains an amphipathic alpha-helix) and capsid protein VP4 are externalized. Together, they shape a pore in the host membrane through which viral genome is translocated to host cell cytoplasm. Forms an icosahedral capsid of pseudo T=3 symmetry with capsid proteins VP2 and VP3. The capsid is 300 Angstroms in diameter, composed of 60 copies of each capsid protein and enclosing the viral positive strand RNA genome. In terms of biological role, lies on the inner surface of the capsid shell. After binding to the host receptor, the capsid undergoes conformational changes. Capsid protein VP4 is released, Capsid protein VP1 N-terminus is externalized, and together, they shape a pore in the host membrane through which the viral genome is translocated into the host cell cytoplasm. Functionally, component of immature procapsids, which is cleaved into capsid proteins VP4 and VP2 after maturation. Allows the capsid to remain inactive before the maturation step. Its function is as follows. Cysteine protease that cleaves viral polyprotein and specific host proteins. It is responsible for the autocatalytic cleavage between the P1 and P2 regions, which is the first cleavage occurring in the polyprotein. Also cleaves the host translation initiation factor EIF4G1, in order to shut down the capped cellular mRNA translation. Inhibits the host nucleus-cytoplasm protein and RNA trafficking by cleaving host members of the nuclear pores. Counteracts stress granule formation probably by antagonizing its assembly or promoting its dissassembly. Plays an essential role in the virus replication cycle by acting as a viroporin. Creates a pore in the host endoplasmic reticulum and as a consequence releases Ca2+ in the cytoplasm of infected cell. In turn, high levels of cytoplasmic calcium may trigger membrane trafficking and transport of viral ER-associated proteins to viroplasms, sites of viral genome replication. In terms of biological role, induces and associates with structural rearrangements of intracellular membranes. Displays RNA-binding, nucleotide binding and NTPase activities. May play a role in virion morphogenesis and viral RNA encapsidation by interacting with the capsid protein VP3. Functionally, localizes the viral replication complex to the surface of membranous vesicles. Together with protein 3CD binds the Cis-Active RNA Element (CRE) which is involved in RNA synthesis initiation. Acts as a cofactor to stimulate the activity of 3D polymerase, maybe through a nucleid acid chaperone activity. Its function is as follows. Localizes the viral replication complex to the surface of membranous vesicles. It inhibits host cell endoplasmic reticulum-to-Golgi apparatus transport and causes the disassembly of the Golgi complex, possibly through GBF1 interaction. This would result in depletion of MHC, trail receptors and IFN receptors at the host cell surface. Plays an essential role in viral RNA replication by recruiting ACBD3 and PI4KB at the viral replication sites, thereby allowing the formation of the rearranged membranous structures where viral replication takes place. Acts as a primer for viral RNA replication and remains covalently bound to viral genomic RNA. VPg is uridylylated prior to priming replication into VPg-pUpU. The oriI viral genomic sequence may act as a template for this. The VPg-pUpU is then used as primer on the genomic RNA poly(A) by the RNA-dependent RNA polymerase to replicate the viral genome. During genome replication, the VPg-RNA linkage is removed by the host TDP2, thereby accelerating replication. During the late stage of the replication cycle, host TDP2 is excluded from sites of viral RNA synthesis and encapsidation, allowing for the generation of progeny virions. In terms of biological role, involved in the viral replication complex and viral polypeptide maturation. It exhibits protease activity with a specificity and catalytic efficiency that is different from protease 3C. Protein 3CD lacks polymerase activity. Protein 3CD binds to the 5'UTR of the viral genome. Functionally, major viral protease that mediates proteolytic processing of the polyprotein. Cleaves host EIF5B, contributing to host translation shutoff. Also cleaves host PABPC1, contributing to host translation shutoff. Cleaves host NLRP1, triggers host N-glycine-mediated degradation of the autoinhibitory NLRP1 N-terminal fragment. Its function is as follows. Replicates the viral genomic RNA on the surface of intracellular membranes. May form linear arrays of subunits that propagate along a strong head-to-tail interaction called interface-I. Covalently attaches UMP to a tyrosine of VPg, which is used to prime RNA synthesis. The positive stranded RNA genome is first replicated at virus induced membranous vesicles, creating a dsRNA genomic replication form. This dsRNA is then used as template to synthesize positive stranded RNA genomes. ss(+)RNA genomes are either translated, replicated or encapsidated. The chain is Genome polyprotein from Swine vesicular disease virus (strain H/3 '76) (SVDV).